Reading from the N-terminus, the 427-residue chain is Serine--tRNA ligase (427 aa).

236–238 contacts L-serine; the sequence is TAE. 267-269 is a binding site for ATP; the sequence is RRE. Glu290 is a binding site for L-serine. Residue 354-357 participates in ATP binding; that stretch reads EISS. L-serine is bound at residue Ser390.

Belongs to the class-II aminoacyl-tRNA synthetase family. Type-1 seryl-tRNA synthetase subfamily. As to quaternary structure, homodimer. The tRNA molecule binds across the dimer.

The protein resides in the cytoplasm. The catalysed reaction is tRNA(Ser) + L-serine + ATP = L-seryl-tRNA(Ser) + AMP + diphosphate + H(+). The enzyme catalyses tRNA(Sec) + L-serine + ATP = L-seryl-tRNA(Sec) + AMP + diphosphate + H(+). It participates in aminoacyl-tRNA biosynthesis; selenocysteinyl-tRNA(Sec) biosynthesis; L-seryl-tRNA(Sec) from L-serine and tRNA(Sec): step 1/1. In terms of biological role, catalyzes the attachment of serine to tRNA(Ser). Is also able to aminoacylate tRNA(Sec) with serine, to form the misacylated tRNA L-seryl-tRNA(Sec), which will be further converted into selenocysteinyl-tRNA(Sec). This is Serine--tRNA ligase from Rippkaea orientalis (strain PCC 8801 / RF-1) (Cyanothece sp. (strain PCC 8801)).